Here is a 480-residue protein sequence, read N- to C-terminus: Dihydrolipoyllysine-residue acetyltransferase component 4 of pyruvate dehydrogenase complex, chloroplastic (480 aa).

A chloroplast-targeting transit peptide spans 1–53 (MAVSSSSFLSTASLTNSKSNISFASSVSPSLRSVVFRSTTPATSHRRSMTVRS). The region spanning 55–133 (IREIFMPALS…AAIGLLAETE (79 aa)) is the Lipoyl-binding domain. The residue at position 96 (Lys96) is an N6-lipoyllysine. Disordered regions lie at residues 140–168 (KSKA…SPAP) and 224–245 (AGIA…PVTA). A compositionally biased stretch (low complexity) spans 142–156 (KAASKSSSSVAEAVV). One can recognise a Peripheral subunit-binding (PSBD) domain in the interval 187 to 224 (VATPYAKKLAKQHKVDIESVAGTGPFGRITASDVETAA). Pro residues predominate over residues 234-243 (APPPPPPPPV). His453 is an active-site residue.

Belongs to the 2-oxoacid dehydrogenase family. Requires (R)-lipoate as cofactor.

The protein resides in the plastid. It localises to the chloroplast stroma. It carries out the reaction N(6)-[(R)-dihydrolipoyl]-L-lysyl-[protein] + acetyl-CoA = N(6)-[(R)-S(8)-acetyldihydrolipoyl]-L-lysyl-[protein] + CoA. Its function is as follows. The pyruvate dehydrogenase complex catalyzes the overall conversion of pyruvate to acetyl-CoA and CO(2). It contains multiple copies of three enzymatic components: pyruvate dehydrogenase (E1), dihydrolipoamide acetyltransferase (E2) and lipoamide dehydrogenase (E3). In Arabidopsis thaliana (Mouse-ear cress), this protein is Dihydrolipoyllysine-residue acetyltransferase component 4 of pyruvate dehydrogenase complex, chloroplastic (LTA2).